The sequence spans 454 residues: tRNA modification GTPase MnmE (454 aa).

Residues R23, E80, and K120 each contribute to the (6S)-5-formyl-5,6,7,8-tetrahydrofolate site. Residues 216–377 form the TrmE-type G domain; that stretch reads GMKVVIAGRP…LRNHLKQSMG (162 aa). Residue N226 coordinates K(+). GTP contacts are provided by residues 226–231, 245–251, 270–273, 335–338, and 358–360; these read NAGKSS, TDIAGTT, DTAG, NKAD, and SAR. S230 contacts Mg(2+). T245, I247, and T250 together coordinate K(+). Mg(2+) is bound at residue T251. K454 contacts (6S)-5-formyl-5,6,7,8-tetrahydrofolate.

It belongs to the TRAFAC class TrmE-Era-EngA-EngB-Septin-like GTPase superfamily. TrmE GTPase family. Homodimer. Heterotetramer of two MnmE and two MnmG subunits. It depends on K(+) as a cofactor.

It localises to the cytoplasm. In terms of biological role, exhibits a very high intrinsic GTPase hydrolysis rate. Involved in the addition of a carboxymethylaminomethyl (cmnm) group at the wobble position (U34) of certain tRNAs, forming tRNA-cmnm(5)s(2)U34. The sequence is that of tRNA modification GTPase MnmE from Salmonella arizonae (strain ATCC BAA-731 / CDC346-86 / RSK2980).